A 276-amino-acid polypeptide reads, in one-letter code: Bis(5'-nucleosyl)-tetraphosphatase, symmetrical (276 aa).

It belongs to the Ap4A hydrolase family.

It carries out the reaction P(1),P(4)-bis(5'-adenosyl) tetraphosphate + H2O = 2 ADP + 2 H(+). Its function is as follows. Hydrolyzes diadenosine 5',5'''-P1,P4-tetraphosphate to yield ADP. This is Bis(5'-nucleosyl)-tetraphosphatase, symmetrical from Dechloromonas aromatica (strain RCB).